The sequence spans 476 residues: Cytosolic iron-sulfur assembly component 3 (476 aa).

Ala-2 carries the N-acetylalanine modification. [4Fe-4S] cluster-binding residues include Cys-24, Cys-71, Cys-74, Cys-77, Cys-190, Cys-246, Cys-395, and Cys-399.

It belongs to the NARF family. External component of the CIA complex. In the CIA complex, interacts directly with CIAO1 and MMS19.

Component of the cytosolic iron-sulfur protein assembly (CIA) complex, a multiprotein complex that mediates the incorporation of iron-sulfur cluster into extramitochondrial Fe/S proteins. Seems to negatively regulate the level of HIF1A expression, although this effect could be indirect. The polypeptide is Cytosolic iron-sulfur assembly component 3 (Pongo abelii (Sumatran orangutan)).